Reading from the N-terminus, the 104-residue chain is QDWLTFQKKHITNTRDVDCDNIMSTNLFHCKDKNTFIYSRPEPVKAICKGIIASKNVLTTSEFYLSDCNVTSRPCKYKLKKSTNKFCVTCENQAPVHFVGVGSC.

Glutamine 1 is subject to Pyrrolidone carboxylic acid. The active-site Proton acceptor is the histidine 10. 4 disulfide bridges follow: cysteine 19–cysteine 68, cysteine 30–cysteine 75, cysteine 48–cysteine 90, and cysteine 87–cysteine 104. Position 31 to 35 (31 to 35) interacts with substrate; that stretch reads KDKNT. The active-site Proton donor is histidine 97.

It belongs to the pancreatic ribonuclease family.

In terms of biological role, basic protein with antiproliferative/cytotoxic activity against several tumor cell lines in vitro, as well as antitumor in vivo. It exhibits a ribonuclease-like activity against high molecular weight ribosomal RNA. This Lithobates pipiens (Northern leopard frog) protein is Protein P-30.